The chain runs to 140 residues: Nucleoside diphosphate kinase (140 aa).

The ATP site is built by lysine 11, phenylalanine 59, arginine 87, threonine 93, arginine 104, and asparagine 114. Histidine 117 functions as the Pros-phosphohistidine intermediate in the catalytic mechanism.

This sequence belongs to the NDK family. As to quaternary structure, homotetramer. The cofactor is Mg(2+).

The protein localises to the cytoplasm. It catalyses the reaction a 2'-deoxyribonucleoside 5'-diphosphate + ATP = a 2'-deoxyribonucleoside 5'-triphosphate + ADP. The catalysed reaction is a ribonucleoside 5'-diphosphate + ATP = a ribonucleoside 5'-triphosphate + ADP. Major role in the synthesis of nucleoside triphosphates other than ATP. The ATP gamma phosphate is transferred to the NDP beta phosphate via a ping-pong mechanism, using a phosphorylated active-site intermediate. This Rickettsia typhi (strain ATCC VR-144 / Wilmington) protein is Nucleoside diphosphate kinase.